The following is a 155-amino-acid chain: Large ribosomal subunit protein uL22c (155 aa).

It belongs to the universal ribosomal protein uL22 family. In terms of assembly, part of the 50S ribosomal subunit.

It localises to the plastid. Its subcellular location is the chloroplast. This protein binds specifically to 23S rRNA. Its function is as follows. The globular domain of the protein is located near the polypeptide exit tunnel on the outside of the subunit, while an extended beta-hairpin is found that lines the wall of the exit tunnel in the center of the 70S ribosome. This chain is Large ribosomal subunit protein uL22c (rpl22), found in Solanum tuberosum (Potato).